The chain runs to 625 residues: Protein LEO1 homolog (625 aa).

Disordered regions lie at residues 1 to 214 (MVKG…DMVL) and 415 to 625 (EREK…SDED). 2 stretches are compositionally biased toward acidic residues: residues 40–55 (DEAE…GEAE) and 63–80 (EAES…PGES). 3 stretches are compositionally biased toward basic and acidic residues: residues 97–113 (SEAR…EHGG), 121–137 (QEVV…KHYE), and 182–197 (EYVR…RSPI). The residue at position 203 (Ser-203) is a Phosphoserine. A compositionally biased stretch (basic and acidic residues) spans 415 to 425 (EREKEKREKAE). A coiled-coil region spans residues 415-539 (EREKEKREKA…ETEEEEEEKS (125 aa)). Residues 426–436 (SQNLKASTKLS) show a composition bias toward polar residues. Residues 471 to 491 (YRSNRGYEEDLEAEAQRERRI) show a composition bias toward basic and acidic residues. Over residues 492–501 (LNAKKSHKGI) the composition is skewed to basic residues. The segment covering 523–537 (EREESEYETEEEEEE) has biased composition (acidic residues). The segment covering 538-547 (KSPARGRGKD) has biased composition (basic and acidic residues). Phosphoserine is present on residues Ser-548, Ser-570, Ser-600, Ser-605, and Ser-622. Acidic residues predominate over residues 548-561 (SEDEYEEDAEEDEE).

This sequence belongs to the LEO1 family. Component of the nuclear PAF1 complex (PAF1C), which consists of VIP2/ELF7/PAF1, VIP3/SKI8/WDR61, VIP4/LEO1, VIP5/RTF1, VIP6/ELF8/CTR9 and CDC73. Interacts with VIP3 and VIP6. In terms of tissue distribution, expressed in roots, shoot apices, stems, cauline leaves, inflorescence apices and flowers.

The protein localises to the nucleus. Component of the PAF1 complex (PAF1C) which is involved in histone modifications such as methylation on histone H3 'Lys-4' (H3K4me3). Involved in regulation of flowering time. Required for the expression of the flowering repressor and MADS box gene FLC. Involved in the control of seed dormancy and germination. The polypeptide is Protein LEO1 homolog (Arabidopsis thaliana (Mouse-ear cress)).